Reading from the N-terminus, the 340-residue chain is 2-deoxy-scyllo-inosamine dehydrogenase (340 aa).

Residues Cys37, His59, Cys89, Cys92, Cys95, Cys103, and Glu144 each coordinate Zn(2+).

Belongs to the zinc-containing alcohol dehydrogenase family. DOIA dehydrogenase subfamily. Zn(2+) is required as a cofactor.

It carries out the reaction 2-deoxy-scyllo-inosamine + NADP(+) = 3-amino-2,3-dideoxy-scyllo-inosose + NADPH + H(+). The catalysed reaction is 2-deoxy-scyllo-inosamine + NAD(+) = 3-amino-2,3-dideoxy-scyllo-inosose + NADH + H(+). It participates in metabolic intermediate biosynthesis; 2-deoxystreptamine biosynthesis; 2-deoxystreptamine from D-glucose 6-phosphate: step 3/4. The protein operates within antibiotic biosynthesis; neomycin biosynthesis. In terms of biological role, catalyzes the oxidation of 2-deoxy-scyllo-inosamine (DOIA) with NAD(+) or NADP(+), forming 3-amino-2,3-dideoxy-scyllo-inosose (amino-DOI). This is 2-deoxy-scyllo-inosamine dehydrogenase (neoA) from Streptomyces fradiae (Streptomyces roseoflavus).